The primary structure comprises 132 residues: Myelin P2 protein (132 aa).

Ser2 carries the N-acetylserine modification. Residue Arg107 coordinates (9Z)-octadecenoate. Arg107 is a binding site for hexadecanoate. An intrachain disulfide couples Cys118 to Cys125. Position 127-129 (127-129) interacts with (9Z)-octadecenoate; that stretch reads RIY. A hexadecanoate-binding site is contributed by 127-129; sequence RIY.

It belongs to the calycin superfamily. Fatty-acid binding protein (FABP) family. As to quaternary structure, monomer. In terms of tissue distribution, detected in spinal cord (at protein level).

It localises to the cytoplasm. Functionally, may play a role in lipid transport protein in Schwann cells. May bind cholesterol. This is Myelin P2 protein (PMP2) from Equus caballus (Horse).